Reading from the N-terminus, the 993-residue chain is MEKQKPFTLFVPPRLSSSQVSAVKPQTAGGDSNYFKTANKCTEGDFGVPFTMSSRENIDKDPAFQKLSILPMLEQVANSGSCHYQEGVNDSDFENSEPMSRLYSKLYKEAEKIKKWKVSIESELKQKENKLQENRKIIEAQRKAIQELQFENEKVSLKLEEEIQENKDLIKENNATIHWCNLLKETCARSAEKTNKYEYEREETRQVYVDLNSNIEKMILAFEELRVQAENARLEMHFKLKEDHEKIQHLEEEYQKEVNNKENQVSELLIQSAEKENKMKDLTFLLEESRDKANQLEEKTKLQDENLKELSEKKDHLTSELEDIKMSMQRSMSTQKALEEDLQIATKTISQLTEVKEAQMEELNKAKTTHSFVVTELKATTCTLEELLRTEQQRLEKNEDQLKLITVELQKKSNELEEMTKFKNNKEVELEELKNILAEDQKLLDEKKQVEKLAEELQEKEQELTFLLETREKEVHDLQEQVTVTKTSEQHYLKQVEEMKTELEKEKLKNTELTASCDMLLLENKKFVQEASDMALELKKHQEDIINCKKQEERLLKQIENLEEKEMHLRDELESVRKEFIQQGDEVKCKLDKSEENARSIECEVLKKEKQMKILESKCNNLKKQVENKSKNIEELHQENKTLKKKSSAEIKQLNAYEIKVSKLELELESTKQRFEEMTNNYQKEIENKKISEGKLLGEVEKAKATVDEAVKLQKEIDLRCQHKIAEMVALMEKHKHQYDKIVEERDSELGLYKNREQEQSSAKIALETELSNIRNELVSLKKQLEIEKEEKEKLKMAKENTAILKDKKDKKIQASLLESPEATSWKFDSKTTPSQNISRLSSSMDSGKSKDNRDNLRASAKSILPTTVTKEYTVKTPTKKSIYQRENKYIPTGGSNKKRKTAFEFDVNSDSSETADLLSLVSEEDVSNRLYDNNPPDSHLLVKTPKQTPLSLSTPASFMKFGSLKKMREDRWTTIAKIDRKRRLKEAEKLFS.

The short motif at 98 to 108 (PMSRLYSKLYK) is the Mediates head to head self-assembly of N-terminal ends element. Residues 114–117 (KKWK) carry the Nuclear localization signal motif. Coiled coils occupy residues 117–172 (KVSI…LIKE) and 215–688 (IEKM…EIEN). An interaction with SYCE3 region spans residues 203–359 (ETRQVYVDLN…SQLTEVKEAQ (157 aa)). Positions 694-788 (GKLLGEVEKA…VSLKKQLEIE (95 aa)) are required for pH-induced assembly of C-terminal ends into antiparallel tetramers. Residues 697-700 (LGEV) carry the Nuclear localization signal motif. The stretch at 764–808 (KIALETELSNIRNELVSLKKQLEIEKEEKEKLKMAKENTAILKDK) forms a coiled coil. The interval 801–993 (NTAILKDKKD…RLKEAEKLFS (193 aa)) is DNA-binding. A Phosphoserine modification is found at Ser-820. The segment at 824–861 (TSWKFDSKTTPSQNISRLSSSMDSGKSKDNRDNLRASA) is disordered. The span at 831–847 (KTTPSQNISRLSSSMDS) shows a compositional bias: polar residues. Positions 848 to 857 (GKSKDNRDNL) are enriched in basic and acidic residues. The Nuclear localization signal motif lies at 898–901 (KKRK).

Structural component of synaptonemal complexes. Homotetramer that consists of an N-terminal four-helical bundle that bifurcates into two elongated C-terminal dimeric coiled coils. This tetrameric building block potentially self-assembles into a supramolecular zipper-like lattice to mediate meiotic chromosome synapsis. Self-assembly is likely initiated by local proton density at chromosome axis, which is predicted to trigger antiparallel back to back assembly of adjacent C-terminal ends into tetrameric structures that anchor to chromosomal DNA. Then the N-terminal ends are predicted to undergo cooperative antiparallel head to head assembly at the midline of synaptonemal complexes central element to form a zipper-like lattice between properly aligned homologous chromosomes. The nascent synapsis generated by SYCP1 is stabilized through interaction with central element proteins SYCE1 and SYCE2. Interacts (via tetrameric core) with SYCE3; the interaction remodels SYCP1 homotetramers to 2:1 heterotrimers with SYCE3. SYCP1/SYCE3 heterotrimers form lattice assemblies as part of the mature synaptonemal complex via both lateral and head-to-head interactions. Forms a complex with EWSR1, PRDM9, SYCP3 and REC8; complex formation is dependent of phosphorylated form of REC8 and requires PRDM9 bound to hotspot DNA; EWSR1 joins PRDM9 with the chromosomal axis through REC8. Interacts with SPO16. Detected in testis. Detected in spermatocytes (at protein level).

The protein localises to the nucleus. It localises to the chromosome. The protein resides in the centromere. In terms of biological role, major component of the transverse filaments of synaptonemal complexes, formed between homologous chromosomes during meiotic prophase. Required for normal assembly of the central element of the synaptonemal complexes. Required for normal centromere pairing during meiosis. Required for normal meiotic chromosome synapsis during oocyte and spermatocyte development and for normal male and female fertility. This Mus musculus (Mouse) protein is Synaptonemal complex protein 1.